The following is a 1111-amino-acid chain: MLRSSRSRLVTRNILLRQFKNGNNVRLMNATRFQHNGIVGNEKLASDSQKFVDESYHWMQYRKQMNDPVSRQRLEQLESQWVKSIQLKQDDKGKDIDQPESENRKKEEEQVPTEEKDNDTAKESETSQQRDSVAETQGPASTSGGASGNGESSGNGSGDDGNNGSGNGKPSKNAKQPFPEVYPQVMALPISRRPLFPGFYKAVVISDERVMKAIKDMSDRQQPYIGAFLLKDSTVDTDVIHKADEVYNVGVFAQVTSAFPSKDEKTGAETMTALLYPHRRIKLDELIPPTSEQNLKDESDVSKSEGVENNEQEVVKASLQKMENMKDVEEDDDENLTGFLKDYDVSLVNVSNLADKEFNPNSPVINALTSEILKVFKEISQLNTMFREQIATFSASIQSATTNIFEEPARLADFAAAVSAGEEEELQEILESLDIEQRLEKALTVLKKELMNAELQNKISKDVETKIQKRQREYYLMEQLKGIKRELGIDDGRDKLIESFKDRVSKLQLPETVQKVFDDEITKLATLETSQSEFGVIRNYLDWITSLPWGIISKEQYSIPKAKKILDEDHYGMKDVKDRILEFIAVGKLLGKVDGKIICFVGPPGVGKTSIGKSIARSLNRQFFRFSVGGMTDVAEIKGHRRTYIGALPGRVIQALKKCQTQNPLILIDEIDKIGHGGIHGDPAAALLELLDPEQNNSFLDNYMDIPIDLSKVLFVCTANSLETIPRPLLDRMEVIELTGYVAEEKVKIAENYLSPSAKKSAGLDNANVNITENAIVSLMKHYCRESGVRSLKKHIEKIYRKAALNVVKQLSIDDKPMENEEVKDQKDIKVKQSENKSSAEASTVESTTEENELIKTQKSHDNKGSLEVPETVSVTVDENNLKDYVGPPIFTTDRLYESTPPGVVMGLAWTSMGGCAMYVESVLEQPLTHSTQPTLERTGQLGDVMKESSRLAYSFSKMYLAKKFPENRFFEVAKIHLHCPEGATPKDGPSAGVTMASSFLSLALNKGLDPTVAMTGELTLTGKVLRIGGLREKAVAAKRSGAKTIIFPKDNLSDWAELPENVKEGLEPLAADWYEDVFQRLFGDVDTNKGNTVWSEDFKKIDEKRNKETK.

The transit peptide at M1–N21 directs the protein to the mitochondrion. Disordered stretches follow at residues I85–P177 and P288–E311. Over residues K88–E125 the composition is skewed to basic and acidic residues. Residues T126 to E135 are compositionally biased toward polar residues. Over residues G145–N167 the composition is skewed to gly residues. The Lon N-terminal domain maps to V185 to L450. The segment covering N294–G306 has biased composition (basic and acidic residues). G602–T609 provides a ligand contact to ATP. 2 stretches are compositionally biased toward basic and acidic residues: residues E819–E835 and E853–G865. The interval E819–S866 is disordered. The 187-residue stretch at S899–D1085 folds into the Lon proteolytic domain. Active-site residues include S991 and K1034.

It belongs to the peptidase S16 family. As to quaternary structure, homohexamer or homoheptamer. Organized in a ring with a central cavity.

Its subcellular location is the mitochondrion matrix. The catalysed reaction is Hydrolysis of proteins in presence of ATP.. Functionally, ATP-dependent serine protease that mediates the selective degradation of misfolded, unassembled or oxidatively damaged polypeptides as well as certain short-lived regulatory proteins in the mitochondrial matrix. May also have a chaperone function in the assembly of inner membrane protein complexes. Participates in the regulation of mitochondrial gene expression and in the maintenance of the integrity of the mitochondrial genome. Binds to mitochondrial DNA in a site-specific manner. The protein is Lon protease homolog, mitochondrial of Kluyveromyces lactis (strain ATCC 8585 / CBS 2359 / DSM 70799 / NBRC 1267 / NRRL Y-1140 / WM37) (Yeast).